A 349-amino-acid chain; its full sequence is Core protein VP7 (349 aa).

N287 is a glycosylation site (N-linked (GlcNAc...) asparagine; by host).

It belongs to the orbivirus VP7 family. In terms of assembly, homotrimer that assemble in a complex of 260 capsomers on an inner scaffold composed of VP3.

The protein localises to the virion. In terms of biological role, the VP7 protein is one of the five proteins (with VP1, VP3, VP4, and VP6) which form the inner capsid of the virus. The chain is Core protein VP7 (Segment-7) from Antilocapra americana (Pronghorn).